The sequence spans 172 residues: RNA pyrophosphohydrolase (172 aa).

Positions 6-149 (GFRANVGIII…KRDVYRKVMK (144 aa)) constitute a Nudix hydrolase domain. Positions 38-59 (GGLDDGESAEEAMYRELYEEVG) match the Nudix box motif.

This sequence belongs to the Nudix hydrolase family. RppH subfamily. A divalent metal cation is required as a cofactor.

Accelerates the degradation of transcripts by removing pyrophosphate from the 5'-end of triphosphorylated RNA, leading to a more labile monophosphorylated state that can stimulate subsequent ribonuclease cleavage. This Shewanella denitrificans (strain OS217 / ATCC BAA-1090 / DSM 15013) protein is RNA pyrophosphohydrolase.